Here is a 336-residue protein sequence, read N- to C-terminus: MVKIAVIGAGVVGLSTALQVKQNFPFCSVTVVAEKFNTETTSDGAGGLFRPNFLTLSANPLESIKQWSQDTFSHFNNLFNSPEASDCGIALMSGFLLSNKEKLDMIEDISLGQSKMTAEQIAKMGFDCKHVTKVLTYTMECRRYMPWLTSKFLSLGGSMHHHRLKSLEELVGVYDVVVNCSGLGAKDLVPDPLVYPVKGQLIQVEAPWVKHFYFFEDDTYVIPNINRTSLGGIRIKNDYSTEVDPEISKSIWQRCTSRIPSLQKAKVLWEWAGLRPHRDPIRIEQDVMNFPKGTLKVVHNYGHGANGVSLSWGTAKHATRLVRQFLENDPELRSKL.

E34, K35, T41, S42, G304, V308, and S309 together coordinate FAD. A Microbody targeting signal motif is present at residues 334–336 (SKL).

It belongs to the DAMOX/DASOX family. As to quaternary structure, monomer. FAD is required as a cofactor.

The protein resides in the peroxisome matrix. It carries out the reaction D-aspartate + O2 + H2O = oxaloacetate + H2O2 + NH4(+). The catalysed reaction is D-glutamate + O2 + H2O = H2O2 + 2-oxoglutarate + NH4(+). In terms of biological role, selectively catalyzes the oxidative deamination of acidic amino acids. Suppresses the level of D-aspartate in the brain, an amino acid that can act as an agonist for glutamate receptors. Protects the organism from the toxicity of D-amino acids. May also function in the intestine. The sequence is that of D-aspartate oxidase from Octopus vulgaris (Common octopus).